The following is a 312-amino-acid chain: DNA-directed RNA polymerase subunit alpha (312 aa).

Positions M1–T226 are alpha N-terminal domain (alpha-NTD). The tract at residues K243–D312 is alpha C-terminal domain (alpha-CTD).

This sequence belongs to the RNA polymerase alpha chain family. As to quaternary structure, homodimer. The RNAP catalytic core consists of 2 alpha, 1 beta, 1 beta' and 1 omega subunit. When a sigma factor is associated with the core the holoenzyme is formed, which can initiate transcription.

It carries out the reaction RNA(n) + a ribonucleoside 5'-triphosphate = RNA(n+1) + diphosphate. In terms of biological role, DNA-dependent RNA polymerase catalyzes the transcription of DNA into RNA using the four ribonucleoside triphosphates as substrates. This is DNA-directed RNA polymerase subunit alpha from Enterococcus faecalis (strain ATCC 700802 / V583).